A 167-amino-acid chain; its full sequence is Adenylylsulfate reductase subunit beta (167 aa).

4Fe-4S ferredoxin-type domains lie at 1-35 (MPTFVDPSKCDGCKGGEKTACMYICPNDLMILDPE) and 38-67 (KAFNQEPEACWECYSCIKICPQGAITARPY). [4Fe-4S] cluster contacts are provided by Cys10, Cys13, Cys21, Cys25, Cys47, Cys50, Cys53, and Cys57.

Heterodimer composed of AprA and AprB. The heterodimers can dimerize to form heterotetramers. [4Fe-4S] cluster is required as a cofactor.

It localises to the cytoplasm. Its function is as follows. Iron-sulfur cluster subunit of the adenylylsulfate reductase which catalyzes reversibly the reduction of adenosine 5'-phosphosulfate (APS) to sulfite and AMP during dissimilatory sulfate reduction. The iron-sulfur cluster 2 is thought to accept electrons from a still unknown electron donor and transfer electrons to the iron-sulfur cluster 1 of this protein and then onto the FAD of AprA. The sequence is that of Adenylylsulfate reductase subunit beta from Megalodesulfovibrio gigas (strain ATCC 19364 / DSM 1382 / NCIMB 9332 / VKM B-1759) (Desulfovibrio gigas).